A 371-amino-acid chain; its full sequence is Alanine dehydrogenase (371 aa).

Residues arginine 15 and lysine 75 each contribute to the substrate site. Histidine 96 serves as the catalytic Proton donor/acceptor. NAD(+) is bound by residues serine 134, aspartate 198, arginine 203, serine 220, 239–240, 267–270, lysine 279, and 298–301; these read VL, VAID, and VANM. Catalysis depends on aspartate 270, which acts as the Proton donor/acceptor.

This sequence belongs to the AlaDH/PNT family. Mg(2+) is required as a cofactor.

The enzyme catalyses L-alanine + NAD(+) + H2O = pyruvate + NH4(+) + NADH + H(+). It functions in the pathway amino-acid degradation; L-alanine degradation via dehydrogenase pathway; NH(3) and pyruvate from L-alanine: step 1/1. Functionally, catalyzes the reversible reductive amination of pyruvate to L-alanine. The polypeptide is Alanine dehydrogenase (Halomonas elongata (strain ATCC 33173 / DSM 2581 / NBRC 15536 / NCIMB 2198 / 1H9)).